The sequence spans 576 residues: MAGUK p55 subfamily member 7 (576 aa).

L27 domains are found at residues 10–64 and 65–122; these read SEMG…EDCA and PTPV…YDPE. Residues 139–220 form the PDZ domain; sequence IIRLVKNKEP…AITFKVVPGI (82 aa). In terms of domain architecture, SH3 spans 228-298; it reads EPKMFIKALF…PSKHFQERRL (71 aa). The Guanylate kinase-like domain occupies 368 to 560; sequence HRLVVLVGPT…AFSELKQALK (193 aa).

Belongs to the MAGUK family.

Its subcellular location is the membrane. The protein resides in the cell junction. It localises to the tight junction. The protein localises to the adherens junction. Acts as an important adapter that promotes epithelial cell polarity and tight junction formation. Involved in the assembly of protein complexes at sites of cell-cell contact. The sequence is that of MAGUK p55 subfamily member 7 (mpp7) from Danio rerio (Zebrafish).